Reading from the N-terminus, the 157-residue chain is DNA gyrase inhibitor 2 (157 aa).

The protein belongs to the DNA gyrase inhibitor family. Interacts with DNA gyrase.

Its subcellular location is the cytoplasm. Its function is as follows. Inhibits the supercoiling activity of DNA gyrase. Acts by inhibiting DNA gyrase at an early step, prior to (or at the step of) binding of DNA by the gyrase. It protects cells against toxins that target DNA gyrase, by inhibiting activity of these toxins and reducing the formation of lethal double-strand breaks in the cell. In Dickeya dadantii (strain 3937) (Erwinia chrysanthemi (strain 3937)), this protein is DNA gyrase inhibitor 2.